The primary structure comprises 81 residues: Probable antimicrobial peptide Con13 (81 aa).

An N-terminal signal peptide occupies residues 1-22 (MNRKLLLVFLVVAMLVMQPAEA). Residues 66-81 (EAGQIPFDEFMDVLYS) constitute a propeptide that is removed on maturation.

This sequence belongs to the non-disulfide-bridged peptide (NDBP) superfamily. Long chain multifunctional peptide (group 2) family. Expressed by the venom gland.

It is found in the secreted. The protein localises to the target cell membrane. In terms of biological role, at high concentrations, acts as a pore former in cellular membranes and causes the leakage of the cells. At submicromolar concentrations, degranulates granulocytes and has a weak hemolytic activity against human erythrocytes. Also strongly inhibits the production of superoxide anions. Has a strong antibacterial activity against Gram-negative bacteria but is less active against Gram-positive bacteria. Also has antifungal activity. The protein is Probable antimicrobial peptide Con13 of Opisthacanthus cayaporum (South American scorpion).